We begin with the raw amino-acid sequence, 66 residues long: uncharacterized protein (66 aa).

This is an uncharacterized protein from Human cytomegalovirus (strain AD169) (HHV-5).